A 228-amino-acid chain; its full sequence is Phosphoglycolate phosphatase (228 aa).

The Nucleophile role is filled by Asp-9. 2 residues coordinate Mg(2+): Asp-9 and Asp-11. Substrate is bound at residue Lys-151. Mg(2+)-binding residues include Asp-174 and Asp-178.

The protein belongs to the archaeal SPP-like hydrolase family. Mg(2+) serves as cofactor.

It catalyses the reaction 2-phosphoglycolate + H2O = glycolate + phosphate. Its function is as follows. Catalyzes the dephosphorylation of 2-phosphoglycolate. This Pyrobaculum islandicum (strain DSM 4184 / JCM 9189 / GEO3) protein is Phosphoglycolate phosphatase.